A 152-amino-acid chain; its full sequence is Large ribosomal subunit protein uL13 (152 aa).

The tract at residues 130–152 (HPHEAQSPEVLDLASKNPKNTRS) is disordered.

This sequence belongs to the universal ribosomal protein uL13 family. In terms of assembly, part of the 50S ribosomal subunit.

This protein is one of the early assembly proteins of the 50S ribosomal subunit, although it is not seen to bind rRNA by itself. It is important during the early stages of 50S assembly. This chain is Large ribosomal subunit protein uL13, found in Dinoroseobacter shibae (strain DSM 16493 / NCIMB 14021 / DFL 12).